We begin with the raw amino-acid sequence, 259 residues long: MLMVISPAKTLDYETPPVTQRFTQPQYLDHSQELIQQLRELTPAQISELMHVSDKIGGLNAARFGSWTPAFTPDNAKQALLAFKGDVYTGLNAETLSEADFDYAQQHLRMLSGLYGLLRPLDLMQPYRLEMGTKLANARGKDLYAFWGTRISEWLNEALAEQGDDLLLNLASNEYFSAVKRTALNARIINTEFKDLKNGQYKIISFYAKKARGLMSRFVIQERINDPAQLKQFDVQGYRFSAEQSKADNLVFLRDHAPE.

It belongs to the UPF0246 family.

This Pseudomonas fluorescens (strain ATCC BAA-477 / NRRL B-23932 / Pf-5) protein is UPF0246 protein PFL_1025.